Reading from the N-terminus, the 71-residue chain is Large ribosomal subunit protein bL31 (71 aa).

Zn(2+) is bound by residues C16, C18, C36, and C39.

This sequence belongs to the bacterial ribosomal protein bL31 family. Type A subfamily. Part of the 50S ribosomal subunit. Zn(2+) is required as a cofactor.

Its function is as follows. Binds the 23S rRNA. This is Large ribosomal subunit protein bL31 from Petrotoga mobilis (strain DSM 10674 / SJ95).